The sequence spans 331 residues: ABSCISIC ACID-INSENSITIVE 5-like protein 1 (331 aa).

Phosphoserine occurs at positions 40 and 98. A Phosphothreonine modification is found at threonine 143. Positions 247–310 (MERRQRRMIK…RQEIISRSKQ (64 aa)) constitute a bZIP domain. Positions 249–268 (RRQRRMIKNRESAARSRARR) are basic motif. A leucine-zipper region spans residues 275–289 (LELELNNLTEENTKL). Over residues 296–320 (NEKKRRQEIISRSKQVTKEKSGDKL) the composition is skewed to basic and acidic residues. Positions 296–331 (NEKKRRQEIISRSKQVTKEKSGDKLRKIRRMASAGW) are disordered.

This sequence belongs to the bZIP family. ABI5 subfamily. DNA-binding heterodimer with AREB3/DPBF3 or EEL/DPBF4. Interacts with the AFP proteins AFP1, AFP2 and AFP3. Predominantly expressed in seeds.

Its subcellular location is the nucleus. Could participate in abscisic acid-regulated gene expression during seed development. This is ABSCISIC ACID-INSENSITIVE 5-like protein 1 (DPBF2) from Arabidopsis thaliana (Mouse-ear cress).